The chain runs to 200 residues: 3-isopropylmalate dehydratase small subunit (200 aa).

The protein belongs to the LeuD family. LeuD type 1 subfamily. As to quaternary structure, heterodimer of LeuC and LeuD.

The catalysed reaction is (2R,3S)-3-isopropylmalate = (2S)-2-isopropylmalate. Its pathway is amino-acid biosynthesis; L-leucine biosynthesis; L-leucine from 3-methyl-2-oxobutanoate: step 2/4. In terms of biological role, catalyzes the isomerization between 2-isopropylmalate and 3-isopropylmalate, via the formation of 2-isopropylmaleate. The polypeptide is 3-isopropylmalate dehydratase small subunit (Actinobacillus pleuropneumoniae serotype 3 (strain JL03)).